Reading from the N-terminus, the 311-residue chain is Bifunctional pinoresinol-lariciresinol reductase (311 aa).

NADP(+)-binding positions include 10-16, Arg35, and Lys44; that span reads GGTGYLG. The active-site Proton acceptor is the Lys138. Arg142 provides a ligand contact to NADP(+). Position 270 (His270) interacts with substrate.

This sequence belongs to the NmrA-type oxidoreductase family. Isoflavone reductase subfamily. In terms of assembly, dimer. In terms of tissue distribution, expressed in rhizomes, stems, and leaves.

The catalysed reaction is (-)-secoisolariciresinol + NADP(+) = (+)-lariciresinol + NADPH + H(+). The enzyme catalyses (+)-lariciresinol + NADP(+) = (+)-pinoresinol + NADPH + H(+). It functions in the pathway aromatic compound metabolism; phenylpropanoid biosynthesis. Its function is as follows. Reductase involved in lignan biosynthesis. Also involved in the biosynthesis of etoposide, a chemotherapeutic compound of the topoisomerase inhibitor family. Catalyzes the enantioselective sequential conversion of (+)-pinoresinol into (+)-lariciresinol and of (+)-lariciresinol into (-)-secoisolariciresinol. Abstracts the 4R-hydride from the NADPH cofactor during catalysis. This Sinopodophyllum hexandrum (Himalayan may apple) protein is Bifunctional pinoresinol-lariciresinol reductase.